The following is a 270-amino-acid chain: Phosphodiesterase YaeI (270 aa).

Residues Asp-56, His-58, Asp-88, Asn-120, His-209, and His-211 each contribute to the a divalent metal cation site.

Belongs to the metallophosphoesterase superfamily. It depends on a divalent metal cation as a cofactor.

Shows phosphodiesterase activity, hydrolyzing phosphodiester bond in the artificial chromogenic substrate bis-p-nitrophenyl phosphate (bis-pNPP). The polypeptide is Phosphodiesterase YaeI (yaeI) (Escherichia coli (strain K12)).